The chain runs to 364 residues: MSGPRAGFYRQELNKTVWEVPQRLQGLRPVGSGAYGSVCSAYDARLRQKVAVKKLSRPFQSLIHARRTYRELRLLKHLKHENVIGLLDVFTPATSIEDFSEVYLVTTLMGADLNNIVKCQALSDEHVQFLVYQLLRGLKYIHSAGIIHRDLKPSNVAVNEDCELRILDFGLARQADEEMTGYVATRWYRAPEIMLNWMHYNQTVDIWSVGCIMAELLQGKALFPGSDYIDQLKRIMEVVGTPSPEVLAKISSEHARTYIQSLPPMPQKDLSSIFRGANPLAIDLLGRMLVLDSDQRVSAAEALAHAYFSQYHDPEDEPEAEPYDESVEAKERTLEEWKELTYQEVLSFKPPEPPKPPGSLEIEQ.

One can recognise a Protein kinase domain in the interval 24–308; it reads LQGLRPVGSG…AAEALAHAYF (285 aa). Residues 30–38 and Lys53 contribute to the ATP site; that span reads VGSGAYGSV. Residue Glu71 participates in nilotinib binding. Asp150 (proton acceptor) is an active-site residue. A Phosphothreonine; by MAP2K3, MAP2K4 and MAP2K6 modification is found at Thr180. Residues 180-182 carry the TXY motif; the sequence is TGY. Tyr182 carries the phosphotyrosine; by MAP2K3, MAP2K4 and MAP2K6 modification. Disordered stretches follow at residues 311–331 and 343–364; these read YHDPEDEPEAEPYDESVEAKE and QEVLSFKPPEPPKPPGSLEIEQ. Residues 314–326 show a composition bias toward acidic residues; the sequence is PEDEPEAEPYDES. Residue Tyr323 is modified to Phosphotyrosine; by ZAP70.

The protein belongs to the protein kinase superfamily. CMGC Ser/Thr protein kinase family. MAP kinase subfamily. Interacts with HDAC3 and DUSP16. Requires Mg(2+) as cofactor. In terms of processing, dually phosphorylated on Thr-180 and Tyr-182 by MAP2K3/MKK3, MAP2K4/MKK4 and MAP2K6/MKK6, which activates the enzyme. As to expression, highest levels in the brain and heart. Also expressed in the placenta, lung, liver, skeletal muscle, kidney and pancreas.

It localises to the cytoplasm. The protein localises to the nucleus. It carries out the reaction L-seryl-[protein] + ATP = O-phospho-L-seryl-[protein] + ADP + H(+). The enzyme catalyses L-threonyl-[protein] + ATP = O-phospho-L-threonyl-[protein] + ADP + H(+). With respect to regulation, activated by phosphorylation on threonine and tyrosine by MAP2K3/MKK3, MAP2K4/MKK4 and MAP2K6/MKK6. MAP2K3/MKK3 and MAP2K6/MKK6 are both essential for the activation of MAPK11 induced by environmental stress. HDAC3 interacts directly and selectively with MAPK11 to repress ATF2 transcriptional activity, and regulate TNF gene expression in LPS-stimulated cells. Inhibited by SB203580 and pyridinyl-imidazole related compounds. Serine/threonine kinase which acts as an essential component of the MAP kinase signal transduction pathway. MAPK11 is one of the four p38 MAPKs which play an important role in the cascades of cellular responses evoked by extracellular stimuli such as pro-inflammatory cytokines or physical stress leading to direct activation of transcription factors. Accordingly, p38 MAPKs phosphorylate a broad range of proteins and it has been estimated that they may have approximately 200 to 300 substrates each. MAPK11 functions are mostly redundant with those of MAPK14. Some of the targets are downstream kinases which are activated through phosphorylation and further phosphorylate additional targets. RPS6KA5/MSK1 and RPS6KA4/MSK2 can directly phosphorylate and activate transcription factors such as CREB1, ATF1, the NF-kappa-B isoform RELA/NFKB3, STAT1 and STAT3, but can also phosphorylate histone H3 and the nucleosomal protein HMGN1. RPS6KA5/MSK1 and RPS6KA4/MSK2 play important roles in the rapid induction of immediate-early genes in response to stress or mitogenic stimuli, either by inducing chromatin remodeling or by recruiting the transcription machinery. On the other hand, two other kinase targets, MAPKAPK2/MK2 and MAPKAPK3/MK3, participate in the control of gene expression mostly at the post-transcriptional level, by phosphorylating ZFP36 (tristetraprolin) and ELAVL1, and by regulating EEF2K, which is important for the elongation of mRNA during translation. MKNK1/MNK1 and MKNK2/MNK2, two other kinases activated by p38 MAPKs, regulate protein synthesis by phosphorylating the initiation factor EIF4E2. In the cytoplasm, the p38 MAPK pathway is an important regulator of protein turnover. For example, CFLAR is an inhibitor of TNF-induced apoptosis whose proteasome-mediated degradation is regulated by p38 MAPK phosphorylation. Ectodomain shedding of transmembrane proteins is regulated by p38 MAPKs as well. In response to inflammatory stimuli, p38 MAPKs phosphorylate the membrane-associated metalloprotease ADAM17. Such phosphorylation is required for ADAM17-mediated ectodomain shedding of TGF-alpha family ligands, which results in the activation of EGFR signaling and cell proliferation. Additional examples of p38 MAPK substrates are the FGFR1. FGFR1 can be translocated from the extracellular space into the cytosol and nucleus of target cells, and regulates processes such as rRNA synthesis and cell growth. FGFR1 translocation requires p38 MAPK activation. In the nucleus, many transcription factors are phosphorylated and activated by p38 MAPKs in response to different stimuli. Classical examples include ATF1, ATF2, ATF6, ELK1, PTPRH, DDIT3, TP53/p53 and MEF2C and MEF2A. The p38 MAPKs are emerging as important modulators of gene expression by regulating chromatin modifiers and remodelers. The promoters of several genes involved in the inflammatory response, such as IL6, IL8 and IL12B, display a p38 MAPK-dependent enrichment of histone H3 phosphorylation on 'Ser-10' (H3S10ph) in LPS-stimulated myeloid cells. This phosphorylation enhances the accessibility of the cryptic NF-kappa-B-binding sites marking promoters for increased NF-kappa-B recruitment. Phosphorylates NLRP1 downstream of MAP3K20/ZAK in response to UV-B irradiation and ribosome collisions, promoting activation of the NLRP1 inflammasome and pyroptosis. Phosphorylates methyltransferase DOT1L on 'Ser-834', 'Thr-900', 'Ser-902', 'Thr-984', 'Ser-1001', 'Ser-1009' and 'Ser-1104'. The protein is Mitogen-activated protein kinase 11 (MAPK11) of Homo sapiens (Human).